The following is a 420-amino-acid chain: O-methyltransferase penK (420 aa).

Aspartate 285 provides a ligand contact to S-adenosyl-L-methionine. Histidine 325 functions as the Proton acceptor in the catalytic mechanism.

This sequence belongs to the class I-like SAM-binding methyltransferase superfamily. Cation-independent O-methyltransferase family.

It functions in the pathway secondary metabolite biosynthesis. Its pathway is alkaloid biosynthesis. It participates in mycotoxin biosynthesis. In terms of biological role, O-methyltransferase; part of the gene cluster that mediates the biosynthesis of penigequinolones, potent insecticidal alkaloids that contain a highly modified 10-carbon prenyl group. The first stage is catalyzed by the nonribosomal peptide synthetase penN that condenses anthranilic acid and O-methyl-L-tyrosine to produce 4'-methoxycyclopeptin. 4'-methoxycyclopeptin is then converted to 4'-methoxydehydrocyclopeptin by the ketoglutarate-dependent dioxygenase penM through dehydrogenation to form a double bond between C-alpha and C-beta of the O-methyltyrosine side chain. PenM also converts its first product methoxydehydrocyclopeptin to 4'-methoxycyclopenin. The following conversion of 4'methoxycyclopenin into 4'-methoxyviridicatin is catalyzed by the cyclopenase penL. 4'-methoxyviridicatin is the precursor of quinolone natural products, and is further converted to quinolinone B. The prenyltransferase penI then catalyzes the canonical Friedel-Crafts alkylation of quinolinone B with dimethylallyl cation to yield dimethylallyl quinolone, which is subjected to FAD-dependent dehydrogenation by the FAD-linked oxidoreductase penH to yield conjugated aryl diene. The delta(3') double bond then serves as the site of the second alkylation with DMAPP catalyzed by the prenyltransferase penG to yield a carbenium ion intermediate, which can be attacked by H(2)O to yield a styrenyl quinolone containing a C3'-hydroxyprenyl chain, or undergo cyclization to yield yaequinolones J1 and J2. The conversion of the styrenyl quinolone into the tetrahydrofuran-containing yaequinolone C is performed by the FAD-dependent monooxygenase penE and involves epoxidation of the terminal C7'-C8' olefin, followed by epoxide ring opening initiated by the C3' hydroxyl group. The predicted cysteine hydrolase penJ acts as an epoxide hydrolase that enhances the rate of the 5-exo-tet cyclization step, increasing the yield of yaequinolone C. PenF catalyzes the cationic rearrangement of the epoxide formed by penE (before ring opening to produce yaequinolone C) into yaequinolone D. Finally, the short-chain dehydrogenase/reductase (SDR)-like reductase penD, catalyzes both the dehydration of yaequinolone D and the reduction of the resulting oxonium to yield penigequinolone. This is O-methyltransferase penK from Penicillium thymicola.